The primary structure comprises 127 residues: Large ribosomal subunit protein bL17 (127 aa).

It belongs to the bacterial ribosomal protein bL17 family. Part of the 50S ribosomal subunit. Contacts protein L32.

The sequence is that of Large ribosomal subunit protein bL17 from Aeromonas hydrophila subsp. hydrophila (strain ATCC 7966 / DSM 30187 / BCRC 13018 / CCUG 14551 / JCM 1027 / KCTC 2358 / NCIMB 9240 / NCTC 8049).